A 273-amino-acid chain; its full sequence is Octanoyltransferase LipM (273 aa).

The BPL/LPL catalytic domain occupies 32–240 (GEIPPTLRFY…GFSEILNIEL (209 aa)). The active-site Acyl-thioester intermediate is C142.

It belongs to the octanoyltransferase LipM family. As to quaternary structure, monomer.

It carries out the reaction octanoyl-[ACP] + L-lysyl-[protein] = N(6)-octanoyl-L-lysyl-[protein] + holo-[ACP] + H(+). It functions in the pathway protein modification; protein lipoylation via endogenous pathway; protein N(6)-(lipoyl)lysine from octanoyl-[acyl-carrier-protein]. In terms of biological role, catalyzes the transfer of endogenously produced octanoic acid from octanoyl-acyl-carrier-protein onto the lipoyl domain of GcvH, an intermediate carrier during protein lipoylation. The protein is Octanoyltransferase LipM of Oceanobacillus iheyensis (strain DSM 14371 / CIP 107618 / JCM 11309 / KCTC 3954 / HTE831).